The primary structure comprises 339 residues: Heat-inducible transcription repressor HrcA (339 aa).

It belongs to the HrcA family.

In terms of biological role, negative regulator of class I heat shock genes (grpE-dnaK-dnaJ and groELS operons). Prevents heat-shock induction of these operons. In Clostridioides difficile (strain 630) (Peptoclostridium difficile), this protein is Heat-inducible transcription repressor HrcA.